The following is a 427-amino-acid chain: Glutamate-1-semialdehyde 2,1-aminomutase (427 aa).

Residue Lys-265 is modified to N6-(pyridoxal phosphate)lysine.

Belongs to the class-III pyridoxal-phosphate-dependent aminotransferase family. HemL subfamily. Homodimer. It depends on pyridoxal 5'-phosphate as a cofactor.

The protein resides in the cytoplasm. It catalyses the reaction (S)-4-amino-5-oxopentanoate = 5-aminolevulinate. It functions in the pathway porphyrin-containing compound metabolism; protoporphyrin-IX biosynthesis; 5-aminolevulinate from L-glutamyl-tRNA(Glu): step 2/2. The protein is Glutamate-1-semialdehyde 2,1-aminomutase of Burkholderia multivorans (strain ATCC 17616 / 249).